Here is a 136-residue protein sequence, read N- to C-terminus: Probable disulfide formation protein (136 aa).

Residues 7–26 (SYALYFAWAISCAGTLISIF) form a helical membrane-spanning segment. Residues Cys36 and Cys39 are joined by a disulfide bond. 2 helical membrane passes run 41–60 (YQRI…AYRE) and 67–84 (YILP…YQVF). A disulfide bridge links Cys96 with Cys101. A helical transmembrane segment spans residues 109 to 131 (SYVTIPMASVVAFGAIVCLLVLT).

The protein belongs to the DsbB family. BdbC subfamily.

The protein localises to the cell inner membrane. Its function is as follows. Required for disulfide bond formation in some proteins. The protein is Probable disulfide formation protein of Chlamydia pneumoniae (Chlamydophila pneumoniae).